The chain runs to 503 residues: AMP phosphorylase (503 aa).

AMP-binding positions include Gly-168, 194–199 (SRAITS), and Thr-203. Residue Asp-256 is the Proton donor of the active site. Positions 264 and 288 each coordinate AMP.

Belongs to the thymidine/pyrimidine-nucleoside phosphorylase family. Type 2 subfamily.

It carries out the reaction AMP + phosphate = alpha-D-ribose 1,5-bisphosphate + adenine. The enzyme catalyses CMP + phosphate = cytosine + alpha-D-ribose 1,5-bisphosphate. The catalysed reaction is UMP + phosphate = alpha-D-ribose 1,5-bisphosphate + uracil. Catalyzes the conversion of AMP and phosphate to adenine and ribose 1,5-bisphosphate (R15P). Exhibits phosphorylase activity toward CMP and UMP in addition to AMP. Functions in an archaeal AMP degradation pathway, together with R15P isomerase and RubisCO. This chain is AMP phosphorylase (deoA), found in Pyrococcus abyssi (strain GE5 / Orsay).